Here is a 29-residue protein sequence, read N- to C-terminus: MDILSLGWAALMTMFTFSLALTVWARNGF.

Residues 3–23 traverse the membrane as a helical segment; that stretch reads ILSLGWAALMTMFTFSLALTV.

The protein belongs to the PetN family. The 4 large subunits of the cytochrome b6-f complex are cytochrome b6, subunit IV (17 kDa polypeptide, PetD), cytochrome f and the Rieske protein, while the 4 small subunits are PetG, PetL, PetM and PetN. The complex functions as a dimer.

Its subcellular location is the plastid. It is found in the chloroplast thylakoid membrane. In terms of biological role, component of the cytochrome b6-f complex, which mediates electron transfer between photosystem II (PSII) and photosystem I (PSI), cyclic electron flow around PSI, and state transitions. This chain is Cytochrome b6-f complex subunit 8, found in Phaeodactylum tricornutum (strain CCAP 1055/1).